We begin with the raw amino-acid sequence, 633 residues long: Threonine--tRNA ligase (633 aa).

The region spanning Met-1 to Thr-61 is the TGS domain. The tract at residues Asp-242–Pro-533 is catalytic. Positions 333, 384, and 510 each coordinate Zn(2+).

The protein belongs to the class-II aminoacyl-tRNA synthetase family. In terms of assembly, homodimer. Zn(2+) serves as cofactor.

It is found in the cytoplasm. The enzyme catalyses tRNA(Thr) + L-threonine + ATP = L-threonyl-tRNA(Thr) + AMP + diphosphate + H(+). Catalyzes the attachment of threonine to tRNA(Thr) in a two-step reaction: L-threonine is first activated by ATP to form Thr-AMP and then transferred to the acceptor end of tRNA(Thr). Also edits incorrectly charged L-seryl-tRNA(Thr). The sequence is that of Threonine--tRNA ligase from Ehrlichia ruminantium (strain Gardel).